Here is a 285-residue protein sequence, read N- to C-terminus: Proteasome subunit beta (285 aa).

A propeptide spans 1–50 (MTAEHPARLPQAFMTPGSSSFVDFLAAHDPSLLPSSRALPAGSAPPAPHG) (removed in mature form; by autocatalysis). T51 functions as the Nucleophile in the catalytic mechanism. Residues 266–285 (RTRQARSSRSRHGSLGGDLR) form a disordered region.

Belongs to the peptidase T1B family. The 20S proteasome core is composed of 14 alpha and 14 beta subunits that assemble into four stacked heptameric rings, resulting in a barrel-shaped structure. The two inner rings, each composed of seven catalytic beta subunits, are sandwiched by two outer rings, each composed of seven alpha subunits. The catalytic chamber with the active sites is on the inside of the barrel. Has a gated structure, the ends of the cylinder being occluded by the N-termini of the alpha-subunits. Is capped by the proteasome-associated ATPase, ARC.

It localises to the cytoplasm. It carries out the reaction Cleavage of peptide bonds with very broad specificity.. It participates in protein degradation; proteasomal Pup-dependent pathway. The formation of the proteasomal ATPase ARC-20S proteasome complex, likely via the docking of the C-termini of ARC into the intersubunit pockets in the alpha-rings, may trigger opening of the gate for substrate entry. Interconversion between the open-gate and close-gate conformations leads to a dynamic regulation of the 20S proteasome proteolysis activity. Functionally, component of the proteasome core, a large protease complex with broad specificity involved in protein degradation. This Sanguibacter keddieii (strain ATCC 51767 / DSM 10542 / NCFB 3025 / ST-74) protein is Proteasome subunit beta.